Reading from the N-terminus, the 74-residue chain is Large ribosomal subunit protein bL31 (74 aa).

Zn(2+) contacts are provided by Cys16, Cys18, Cys38, and Cys41.

It belongs to the bacterial ribosomal protein bL31 family. Type A subfamily. Part of the 50S ribosomal subunit. Requires Zn(2+) as cofactor.

In terms of biological role, binds the 23S rRNA. This Mycolicibacterium vanbaalenii (strain DSM 7251 / JCM 13017 / BCRC 16820 / KCTC 9966 / NRRL B-24157 / PYR-1) (Mycobacterium vanbaalenii) protein is Large ribosomal subunit protein bL31.